We begin with the raw amino-acid sequence, 354 residues long: Fructose-bisphosphate aldolase (354 aa).

D-glyceraldehyde 3-phosphate is bound at residue S61. D104 serves as the catalytic Proton donor. Zn(2+)-binding residues include H105, D139, E169, and H221. Residue G222 coordinates dihydroxyacetone phosphate. H260 contacts Zn(2+). Residues 261–263 (GGS) and 282–285 (NIDT) contribute to the dihydroxyacetone phosphate site.

Belongs to the class II fructose-bisphosphate aldolase family. As to quaternary structure, homodimer. Requires Zn(2+) as cofactor.

The enzyme catalyses beta-D-fructose 1,6-bisphosphate = D-glyceraldehyde 3-phosphate + dihydroxyacetone phosphate. It participates in carbohydrate degradation; glycolysis; D-glyceraldehyde 3-phosphate and glycerone phosphate from D-glucose: step 4/4. Its function is as follows. Catalyzes the aldol condensation of dihydroxyacetone phosphate (DHAP or glycerone-phosphate) with glyceraldehyde 3-phosphate (G3P) to form fructose 1,6-bisphosphate (FBP) in gluconeogenesis and the reverse reaction in glycolysis. This is Fructose-bisphosphate aldolase (fba) from Campylobacter jejuni subsp. jejuni serotype O:23/36 (strain 81-176).